We begin with the raw amino-acid sequence, 226 residues long: Ornithine decarboxylase antizyme (226 aa).

The protein belongs to the ODC antizyme family. Interacts with ODC and thereby sterically blocks ODC homodimerization.

Functionally, ornithine decarboxylase (ODC) antizyme protein that negatively regulates ODC activity and intracellular polyamine biosynthesis in response to increased intracellular polyamine levels. Binds to ODC monomers, inhibiting the assembly of the functional ODC homodimer, and targets the monomers for ubiquitin-independent proteolytic destruction by the 26S proteasome. This chain is Ornithine decarboxylase antizyme (spa1), found in Schizosaccharomyces japonicus (Fission yeast).